The following is a 403-amino-acid chain: Tyrosine--tRNA ligase (403 aa).

Residues 46–55 carry the 'HIGH' region motif; it reads PTAPDLHLGH. A 'KMSKS' region motif is present at residues 230 to 234; the sequence is KMSKS. Lys233 is an ATP binding site. In terms of domain architecture, S4 RNA-binding spans 342–402; the sequence is LFITQILNQA…GKKAYAKVTV (61 aa).

The protein belongs to the class-I aminoacyl-tRNA synthetase family. TyrS type 2 subfamily. As to quaternary structure, homodimer.

The protein resides in the cytoplasm. The catalysed reaction is tRNA(Tyr) + L-tyrosine + ATP = L-tyrosyl-tRNA(Tyr) + AMP + diphosphate + H(+). Functionally, catalyzes the attachment of tyrosine to tRNA(Tyr) in a two-step reaction: tyrosine is first activated by ATP to form Tyr-AMP and then transferred to the acceptor end of tRNA(Tyr). The polypeptide is Tyrosine--tRNA ligase (Psychrobacter arcticus (strain DSM 17307 / VKM B-2377 / 273-4)).